The sequence spans 431 residues: Protein EARLY STARVATION 1, chloroplastic (431 aa).

The transit peptide at 1–19 (MAACSRGLVARPFDLTARG) directs the protein to the chloroplast. 2 disordered regions span residues 65-126 (GNKP…DTGI) and 403-431 (GVYP…SPLE). The segment covering 415–431 (PAPPSDDPPGMPPSPLE) has biased composition (pro residues).

It belongs to the ESV1 family.

It is found in the plastid. Its subcellular location is the chloroplast stroma. In terms of biological role, binds preferentially to highly ordered alpha-glucans, such as starch and crystalline maltodextrins. Involved in the organization of the starch granule matrix, thus influencing starch turnover by modulating the accessibility of starch polymers to modifying and degrading enzymes. Required for the control of starch degradation in leaves and starch distribution in nonphotosynthetic parts. Promotes gravitropic responses, negative in shoots but positive in roots, by facilitating starch granules (statoliths) formation in hypocotyls and roots columella. Facilitates tight packing of starch granules in grains. In Oryza sativa subsp. japonica (Rice), this protein is Protein EARLY STARVATION 1, chloroplastic.